Consider the following 335-residue polypeptide: Nucleoid-associated protein YejK (335 aa).

This sequence belongs to the YejK family.

Its subcellular location is the cytoplasm. It is found in the nucleoid. The sequence is that of Nucleoid-associated protein YejK from Shigella flexneri.